A 430-amino-acid polypeptide reads, in one-letter code: Solanesyl-diphosphate synthase 1, mitochondrial (430 aa).

Residues 1-31 constitute a mitochondrion transit peptide; sequence MSWRWALARRVAALGATSGGGDGATAQAQRL. Isopentenyl diphosphate contacts are provided by Lys133, Arg136, and His182. 2 residues coordinate Mg(2+): Asp189 and Asp193. Arg198 contributes to the an all-trans-polyprenyl diphosphate binding site. Position 199 (Arg199) interacts with isopentenyl diphosphate. Positions 275, 276, 313, and 330 each coordinate an all-trans-polyprenyl diphosphate.

It belongs to the FPP/GGPP synthase family. As to quaternary structure, homodimer. The cofactor is Mg(2+). Expressed in leaves, stems and roots. Highest expression in roots.

The protein resides in the mitochondrion. The catalysed reaction is 7 isopentenyl diphosphate + (2E)-geranyl diphosphate = all-trans-nonaprenyl diphosphate + 7 diphosphate. The protein operates within cofactor biosynthesis; ubiquinone biosynthesis. Functionally, involved in the supply of solanesyl diphosphate for ubiquinone-9 (UQ-9) biosynthesis in mitochondria. Farnesyl diphosphate is the preferred substrate. The polypeptide is Solanesyl-diphosphate synthase 1, mitochondrial (Oryza sativa subsp. japonica (Rice)).